Here is a 56-residue protein sequence, read N- to C-terminus: Large ribosomal subunit protein eL24 (56 aa).

Residues Cys6, Cys9, Cys32, and Cys36 each coordinate Zn(2+). Residues 6–36 form a C4-type zinc finger; the sequence is CSFCNTRITPGTGKLYAKKDGTVYYFCSSKC.

Belongs to the eukaryotic ribosomal protein eL24 family. As to quaternary structure, part of the 50S ribosomal subunit. Forms a cluster with proteins L3 and L14. Zn(2+) is required as a cofactor.

In terms of biological role, binds to the 23S rRNA. The protein is Large ribosomal subunit protein eL24 of Methanothrix thermoacetophila (strain DSM 6194 / JCM 14653 / NBRC 101360 / PT) (Methanosaeta thermophila).